Here is a 347-residue protein sequence, read N- to C-terminus: Transcription factor JunB (347 aa).

Glycyl lysine isopeptide (Lys-Gly) (interchain with G-Cter in SUMO2) cross-links involve residues lysine 4, lysine 33, and lysine 36. The tract at residues 51 to 73 is disordered; the sequence is KAPGARGPGPEGGGGGSYFSGQG. Gly residues predominate over residues 56–68; that stretch reads RGPGPEGGGGGSY. A Glycyl lysine isopeptide (Lys-Gly) (interchain with G-Cter in SUMO2) cross-link involves residue lysine 81. 2 positions are modified to phosphothreonine: threonine 102 and threonine 104. Serine 117 bears the Phosphoserine mark. Lysine 141 is covalently cross-linked (Glycyl lysine isopeptide (Lys-Gly) (interchain with G-Cter in SUMO2)). Residues 239–253 are compositionally biased toward basic and acidic residues; that stretch reads FKEEPQTVPEARSRD. The tract at residues 239–260 is disordered; that stretch reads FKEEPQTVPEARSRDATPPVSP. Lysine 240 bears the N6-acetyllysine; alternate mark. Lysine 240 is covalently cross-linked (Glycyl lysine isopeptide (Lys-Gly) (interchain with G-Cter in SUMO1); alternate). A Glycyl lysine isopeptide (Lys-Gly) (interchain with G-Cter in SUMO2); alternate cross-link involves residue lysine 240. The residue at position 251 (serine 251) is a Phosphoserine. Residue threonine 255 is modified to Phosphothreonine. A Phosphoserine modification is found at serine 259. A basic motif region spans residues 268–295; that stretch reads RIKVERKRLRNRLAATKCRKRKLERIAR. A bZIP domain is found at 268–331; the sequence is RIKVERKRLR…AQLKQKVMTH (64 aa). Residues 296 to 324 are leucine-zipper; it reads LEDKVKTLKAENAGLSSTAGLLREQVAQL. A Glycyl lysine isopeptide (Lys-Gly) (interchain with G-Cter in SUMO2) cross-link involves residue lysine 343.

This sequence belongs to the bZIP family. Jun subfamily. In terms of assembly, binds DNA as a homodimer or as a heterodimer with another member of the Jun/Fos family. Component of an AP-1 transcription factor complex composed of JUN-FOS heterodimers composed of JUN-FOS heterodimers. As part of the AP-1 transcription factor complex, forms heterodimers with FOSB, thereby binding to the AP-1 consensus sequence and stimulating transcription. Interacts with ITCH (via its WW domains). In terms of processing, ubiquitinated by ITCH, leading to its degradation.

Its subcellular location is the nucleus. Transcription factor involved in regulating gene activity following the primary growth factor response. Binds to the DNA sequence 5'-TGA[GC]TCA-3'. Heterodimerizes with proteins of the FOS family to form an AP-1 transcription complex, thereby enhancing its DNA binding activity to an AP-1 consensus sequence and its transcriptional activity. This Homo sapiens (Human) protein is Transcription factor JunB (JUNB).